A 448-amino-acid polypeptide reads, in one-letter code: DEAD-box ATP-dependent RNA helicase CshB (448 aa).

The short motif at 4-32 is the Q motif element; the sequence is HPFEQFNLESSLIDAVKDLNFEKPTEIQN. Residues 35-206 form the Helicase ATP-binding domain; the sequence is IPRILKRTNL…NKYLSHPEYV (172 aa). An ATP-binding site is contributed by 48–55; it reads SQTGTGKS. The short motif at 154–157 is the DEAD box element; that stretch reads DEAD. Residues 236–386 form the Helicase C-terminal domain; sequence NLIDILNPYL…EVKAHNQRQA (151 aa). Residues 400 to 418 show a composition bias toward basic residues; that stretch reads NKVRSKIKNKVKPGYKKKF. Positions 400-448 are disordered; it reads NKVRSKIKNKVKPGYKKKFKQEVEKMKRQERKQFSKQQNRQKRKQNKKG. Basic and acidic residues predominate over residues 419–432; it reads KQEVEKMKRQERKQ. The segment covering 438-448 has biased composition (basic residues); it reads NRQKRKQNKKG.

The protein belongs to the DEAD box helicase family. CshB subfamily.

The protein resides in the cytoplasm. The catalysed reaction is ATP + H2O = ADP + phosphate + H(+). Its function is as follows. Probable DEAD-box RNA helicase. May work in conjunction with the cold shock proteins to ensure proper initiation of transcription at low and optimal temperatures. The protein is DEAD-box ATP-dependent RNA helicase CshB of Staphylococcus aureus (strain NCTC 8325 / PS 47).